The chain runs to 454 residues: Tegument protein VP16 homolog (454 aa).

This sequence belongs to the herpesviridae tegument protein VP16 protein family. As to quaternary structure, associates with the VP16-induced complex; binding to host HCFC1 activates VP16 for association with the octamer motif-binding host protein POU2F1, to form a multiprotein-DNA complex responsible for activating transcription of the viral immediate early genes.

It localises to the virion tegument. Its subcellular location is the host nucleus. Its function is as follows. Transcriptional activator of immediate-early (IE) gene products (alpha genes). Acts as a key activator of lytic infection by initiating the lytic program through the assembly of the transcriptional regulatory VP16-induced complex composed of VP16 and two cellular factors, HCFC1 and POU2F1. VP16-induced complex represents a regulatory switch: when it is on, it promotes IE-gene expression and thus lytic infection, and when it is off, it limits IE-gene transcription favoring latent infection. In terms of biological role, may play a role in the aggregation of tegument proteins around nucleocapsids during virus morphogenesis. In Equine herpesvirus 4 (strain 1942) (EHV-4), this protein is Tegument protein VP16 homolog (12).